The primary structure comprises 438 residues: MTEKKPMIQALQAVRGMNDILPDEAEAWEHFEDIVRDWLRSYGYRPIRMPIVEPTPLFKRAIGEVTDIVEKEMYSFEDALNGEQLTLRPEGTASCVRAAIQHKMLSAGAQRLYYHGPMFRHERPQKGRYRQFHQIGVEALGFDGPDIDAEHILMCARLWDDFGLEDVRLELNSLGSSDERARHRAELVAYLERHRERLDDDGRRRLHTNPLRILDTKNPELQDLVDNAPKLLDFLGEDSLKHFNGVQVLLKDAGVPYRINHRLVRGLDYYNRTVFEWVTTRLGAQGTVCAGGRYDGLVEQLGGRPAPAAGFAMGIERLLALWRESGGEAEPAQPDVYVVHLGEQAQRLAFRAAEALRSHGFAVLMHCGGGSFKSQMKKADASGAPVAVVIGDDEAATGEVGLKPLRGPGGQQRVALDGLANAVAECLFTENEEEDGSL.

This sequence belongs to the class-II aminoacyl-tRNA synthetase family. As to quaternary structure, homodimer.

It is found in the cytoplasm. The enzyme catalyses tRNA(His) + L-histidine + ATP = L-histidyl-tRNA(His) + AMP + diphosphate + H(+). The polypeptide is Histidine--tRNA ligase (Aromatoleum aromaticum (strain DSM 19018 / LMG 30748 / EbN1) (Azoarcus sp. (strain EbN1))).